A 671-amino-acid polypeptide reads, in one-letter code: MTGRLAIEDVRPRIAGGSQPSKAVIGEMIPVSALVWREGHDAVSATLNVISPTGEVTRTTMEPAPFDQDKMFSSFVPDALGTWKFRVDAWSDPMSTWRHAVIAKIEVGQDEDDLFNDLEHGAQLFEKAAENASKPTAQKLFAVADSLRSNQPLRARVAPALSKEIHEILHEHPVRELLTRGQNHTVLVERKKAQFSSWYELFPRSTGGWDTDGNPVHGTFSTTAKALKRVAAMGFDTVYFPPIHPIGEIHRKGKNNSLIAEANDVGSPWAIGSAAGGHDAVHPQLGTLKDFQALVSTAEELGLSVALDLALQAAPDHPWARTHQDFFTVLADGTIAYAENPPKKYQDIYPLNFDNNKSAIYAELKRIVLFWIAQGVTVFRVDNPHTKPANFWEWLISTIHETHPEVIFLAEAFTRPARLYGLGKVGFSQSYTYFTWRTTKSELEEFGTEIAAMADVSRPNLFVNTPDILHESLQHGGRAMFAIRAALAATLSPLWGVYSGFELYENEAVSANSEEYLDSEKYELRPRDFTAALEQGDSLEPYLGTLNAIRRAHPALQQLRVIDFHSTDNENIIAYSKVDPVSGDAILVVINLDPTHAHSATVDLTMNAIGCEDVDHFTVTDLVTGAQFPWNKRTYVRLDPCADVAHILELPVVEESKRKALSWRTPTDYSN.

The alpha-maltose 1-phosphate site is built by Lys-252, Gln-312, and Asp-347. Asp-382 functions as the Nucleophile in the catalytic mechanism. Asn-383 lines the alpha-maltose 1-phosphate pocket. The active-site Proton donor is the Glu-411. Residue 521 to 522 (KY) participates in alpha-maltose 1-phosphate binding.

The protein belongs to the glycosyl hydrolase 13 family. GlgE subfamily. As to quaternary structure, homodimer.

It carries out the reaction alpha-maltose 1-phosphate + [(1-&gt;4)-alpha-D-glucosyl](n) = [(1-&gt;4)-alpha-D-glucosyl](n+2) + phosphate. Functionally, maltosyltransferase that uses maltose 1-phosphate (M1P) as the sugar donor to elongate linear or branched alpha-(1-&gt;4)-glucans. Is involved in a branched alpha-glucan biosynthetic pathway from trehalose, together with TreS, Mak and GlgB. The chain is Alpha-1,4-glucan:maltose-1-phosphate maltosyltransferase from Corynebacterium pseudotuberculosis (strain 1002).